The sequence spans 546 residues: Coatomer subunit delta (546 aa).

An interaction with DSL1 region spans residues 190–440; sequence NRFMGSKDPN…VIFTIPVFPQ (251 aa). A disordered region spans residues 236–287; sequence PMATSQRAGHSATGGMKLGGGAGRRAGAAPRPSAISSASSGTPPPPEEDVPE. Residues 260–276 show a composition bias toward low complexity; that stretch reads RAGAAPRPSAISSASSG. A Phosphothreonine modification is found at threonine 277. An MHD domain is found at 288–546; that stretch reads NNGILISIKE…SLKSDEYLVQ (259 aa).

The protein belongs to the adaptor complexes medium subunit family. Delta-COP subfamily. Oligomeric complex that consists of at least the alpha, beta, beta', gamma, delta, epsilon and zeta subunits. Interacts with DSL1.

It is found in the cytoplasm. It localises to the golgi apparatus membrane. The protein resides in the cytoplasmic vesicle. The protein localises to the COPI-coated vesicle membrane. The coatomer is a cytosolic protein complex that binds to dilysine motifs and reversibly associates with Golgi non-clathrin-coated vesicles, which further mediate biosynthetic protein transport from the ER, via the Golgi up to the trans Golgi network. Coatomer complex is required for budding from Golgi membranes, and is essential for the retrograde Golgi-to-ER transport of dilysine-tagged proteins. The chain is Coatomer subunit delta (RET2) from Saccharomyces cerevisiae (strain ATCC 204508 / S288c) (Baker's yeast).